Here is a 72-residue protein sequence, read N- to C-terminus: NAD(P)H-quinone oxidoreductase subunit O (72 aa).

Belongs to the complex I NdhO subunit family. NDH-1 can be composed of about 15 different subunits; different subcomplexes with different compositions have been identified which probably have different functions.

It is found in the cellular thylakoid membrane. It catalyses the reaction a plastoquinone + NADH + (n+1) H(+)(in) = a plastoquinol + NAD(+) + n H(+)(out). The catalysed reaction is a plastoquinone + NADPH + (n+1) H(+)(in) = a plastoquinol + NADP(+) + n H(+)(out). Functionally, NDH-1 shuttles electrons from an unknown electron donor, via FMN and iron-sulfur (Fe-S) centers, to quinones in the respiratory and/or the photosynthetic chain. The immediate electron acceptor for the enzyme in this species is believed to be plastoquinone. Couples the redox reaction to proton translocation, and thus conserves the redox energy in a proton gradient. Cyanobacterial NDH-1 also plays a role in inorganic carbon-concentration. The chain is NAD(P)H-quinone oxidoreductase subunit O from Gloeothece citriformis (strain PCC 7424) (Cyanothece sp. (strain PCC 7424)).